The chain runs to 395 residues: Acetate kinase (395 aa).

N7 is a Mg(2+) binding site. K14 is a binding site for ATP. Residue R92 participates in substrate binding. The active-site Proton donor/acceptor is the D149. ATP is bound by residues 207–211, 282–284, and 329–333; these read HLGNG, DMR, and GIGEN. E382 lines the Mg(2+) pocket.

This sequence belongs to the acetokinase family. As to quaternary structure, homodimer. Mg(2+) is required as a cofactor. Mn(2+) serves as cofactor.

Its subcellular location is the cytoplasm. It catalyses the reaction acetate + ATP = acetyl phosphate + ADP. It participates in metabolic intermediate biosynthesis; acetyl-CoA biosynthesis; acetyl-CoA from acetate: step 1/2. Catalyzes the formation of acetyl phosphate from acetate and ATP. Can also catalyze the reverse reaction. This chain is Acetate kinase, found in Brachyspira hyodysenteriae (strain ATCC 49526 / WA1).